The primary structure comprises 901 residues: Viral-enhancing factor (901 aa).

The Peptidase M60 domain maps to 27 to 330 (HRRTEVGVVL…IFTWLYNPQR (304 aa)). Residues Asn265, Asn278, Asn339, Asn349, Asn540, Asn594, Asn595, Asn642, Asn683, and Asn698 are each glycosylated (N-linked (GlcNAc...) asparagine; by host).

Involved in disruption of the peritrophic membrane and fusion of nucleocapsids with midgut cells. This Pseudalatia unipuncta granulosis virus (PuGV) protein is Viral-enhancing factor (VEF).